The sequence spans 212 residues: Large ribosomal subunit protein uL3 (212 aa).

The disordered stretch occupies residues 117–142 (TSKGKGFQGNIKRHNQSRGPMTHGSR).

It belongs to the universal ribosomal protein uL3 family. In terms of assembly, part of the 50S ribosomal subunit. Forms a cluster with proteins L14 and L19.

Functionally, one of the primary rRNA binding proteins, it binds directly near the 3'-end of the 23S rRNA, where it nucleates assembly of the 50S subunit. This is Large ribosomal subunit protein uL3 from Acholeplasma laidlawii (strain PG-8A).